The following is a 266-amino-acid chain: Orotidine 5'-phosphate decarboxylase (266 aa).

Substrate contacts are provided by residues Asp-37, 59-61, 91-100, Tyr-217, and Arg-235; these read KTH and DRKFADIGNT. Catalysis depends on Lys-93, which acts as the Proton donor.

This sequence belongs to the OMP decarboxylase family.

The enzyme catalyses orotidine 5'-phosphate + H(+) = UMP + CO2. It functions in the pathway pyrimidine metabolism; UMP biosynthesis via de novo pathway; UMP from orotate: step 2/2. The polypeptide is Orotidine 5'-phosphate decarboxylase (URA3) (Cyberlindnera jadinii (Torula yeast)).